Reading from the N-terminus, the 253-residue chain is MEKEAVLTVSDLSLYYSKKKALNTINMTFYKNEITALIGPSGCGKSTLLRSINRMNDLIPTVTITGAIDYKGKNIYSPKVDTVDLRKEIGMVFQQPNPFPFSIYENVVYGLRLKGVKDKALLDEVVENSLKAANIWDEVKDILHSSALGLSGGQQQRVCIARILAVNPEIILMDEPTSALDPISAARVEETMLELKKDYTIAIVTHSMQQASRISDRTAFMLDGNLIEYNDTKSIFLNPEKQETSDYISGKFG.

In terms of domain architecture, ABC transporter spans Leu-7 to Ile-248. Gly-39–Ser-46 provides a ligand contact to ATP.

This sequence belongs to the ABC transporter superfamily. Phosphate importer (TC 3.A.1.7) family. As to quaternary structure, the complex is composed of two ATP-binding proteins (PstB), two transmembrane proteins (PstC and PstA) and a solute-binding protein (PstS).

Its subcellular location is the cell membrane. The enzyme catalyses phosphate(out) + ATP + H2O = ADP + 2 phosphate(in) + H(+). In terms of biological role, part of the ABC transporter complex PstSACB involved in phosphate import. Responsible for energy coupling to the transport system. The chain is Phosphate import ATP-binding protein PstB 1 from Lactococcus lactis subsp. lactis (strain IL1403) (Streptococcus lactis).